Here is a 238-residue protein sequence, read N- to C-terminus: Protein odd-skipped-related 2 (238 aa).

The disordered stretch occupies residues E105–L126. 3 consecutive C2H2-type zinc fingers follow at residues F134–H156, Y162–H184, and F190–H212.

The protein belongs to the Odd C2H2-type zinc-finger protein family. In terms of tissue distribution, at the 8-somite stage, expressed in the pronephros, with weak generalized expression elsewhere. At 24 hpf, expressed in the kidney tubules and the anterior duct, and also in the gut. At 60 hpf, expressed in the tubules and the pectoral fin buds.

It is found in the nucleus. Its function is as follows. Transcriptional repressor. Required for pronephric kidney development. The sequence is that of Protein odd-skipped-related 2 from Danio rerio (Zebrafish).